The sequence spans 845 residues: Translation initiation factor IF-2 (845 aa).

Disordered regions lie at residues 44–91 (KRRK…NLSS) and 119–256 (ARRA…NQEP). Residues 119–129 (ARRAKEREESL) are compositionally biased toward basic and acidic residues. The segment covering 139 to 148 (DETPQEEEEP) has biased composition (acidic residues). Polar residues predominate over residues 156–165 (SLSPAQSQIE). Basic and acidic residues-rich tracts occupy residues 179–194 (IEKR…DRNS) and 202–217 (SEVR…DEKR). The region spanning 343–510 (LRPPVVTIMG…AILLQAEILD (168 aa)) is the tr-type G domain. The G1 stretch occupies residues 352–359 (GHVDHGKT). 352–359 (GHVDHGKT) lines the GTP pocket. Residues 377–381 (GITQH) are G2. The interval 398–401 (DTPG) is G3. GTP contacts are provided by residues 398–402 (DTPGH) and 452–455 (NKID). A G4 region spans residues 452 to 455 (NKID). Residues 488 to 490 (SAK) form a G5 region.

This sequence belongs to the TRAFAC class translation factor GTPase superfamily. Classic translation factor GTPase family. IF-2 subfamily.

It localises to the cytoplasm. In terms of biological role, one of the essential components for the initiation of protein synthesis. Protects formylmethionyl-tRNA from spontaneous hydrolysis and promotes its binding to the 30S ribosomal subunits. Also involved in the hydrolysis of GTP during the formation of the 70S ribosomal complex. In Bartonella henselae (strain ATCC 49882 / DSM 28221 / CCUG 30454 / Houston 1) (Rochalimaea henselae), this protein is Translation initiation factor IF-2.